Reading from the N-terminus, the 326-residue chain is MACARGTVAPPVRASIDVSLVVVVHGGGASNISANRKELVREGIARAATEGYKILKAGGSAVDAVEGAVTVLENDPEFNAGYGSVLNVNGDIEMDASIMDGKDLSAGAVSAVRCIANPVKLARLVMEKTPHCFLTGHGAEKFAEDMGIPQVPVEKLITERTKKHLEKEKLEKGAQNADCPKNSGTVGAVALDCRGNLAYATSTGGIVNKMVGRVGDSPCIGAGGYADNNLGAVSTTGHGESILKVNLARLALFHVEQGKTVEEAAQLALDYMKSKLKGLGGLILVNKTGDWVAKWTSASMPWAAVKNGKLQAGIDLCETRTRDLPC.

Thr-185 acts as the Nucleophile in catalysis. Residues 213–216 and 236–239 contribute to the substrate site; these read RVGD and TGHG.

It belongs to the Ntn-hydrolase family. As to quaternary structure, heterodimer of an alpha and beta chain produced by autocleavage. This heterodimer may then dimerize in turn, giving rise to a heterotetramer. In terms of processing, cleaved into an alpha and beta chain by autocatalysis; this activates the enzyme. The N-terminal residue of the beta subunit is responsible for the nucleophile hydrolase activity. High expression in the heart and brain while low to minimal expression in the other tissues. In ocular tissues, high levels is observed in the optic nerve and retina while relatively low levels of expression are detected in the iris-ciliary body, lens or retinal pigment epithelium.

The protein resides in the cytoplasm. It catalyses the reaction L-asparagine + H2O = L-aspartate + NH4(+). The enzyme catalyses Cleavage of a beta-linked Asp residue from the N-terminus of a polypeptide.. Its function is as follows. Has both L-asparaginase and beta-aspartyl peptidase activity. May be involved in the production of L-aspartate, which can act as an excitatory neurotransmitter in some brain regions. Is highly active with L-Asp beta-methyl ester. Besides, has catalytic activity toward beta-aspartyl dipeptides and their methyl esters, including beta-L-Asp-L-Phe, beta-L-Asp-L-Phe methyl ester (aspartame), beta-L-Asp-L-Ala, beta-L-Asp-L-Leu and beta-L-Asp-L-Lys. Does not have aspartylglucosaminidase activity and is inactive toward GlcNAc-L-Asn. Likewise, has no activity toward glutamine. In Mus musculus (Mouse), this protein is Isoaspartyl peptidase/L-asparaginase (Asrgl1).